Here is a 308-residue protein sequence, read N- to C-terminus: Ornithine carbamoyltransferase (308 aa).

Carbamoyl phosphate contacts are provided by residues 52-55 (STRT), glutamine 79, arginine 103, and 130-133 (HPLQ). L-ornithine-binding positions include asparagine 162, aspartate 224, and 228–229 (SM). Carbamoyl phosphate-binding positions include 264–265 (CL) and arginine 292.

It belongs to the aspartate/ornithine carbamoyltransferase superfamily. OTCase family.

The protein resides in the cytoplasm. The enzyme catalyses carbamoyl phosphate + L-ornithine = L-citrulline + phosphate + H(+). It functions in the pathway amino-acid biosynthesis; L-arginine biosynthesis; L-arginine from L-ornithine and carbamoyl phosphate: step 1/3. Functionally, reversibly catalyzes the transfer of the carbamoyl group from carbamoyl phosphate (CP) to the N(epsilon) atom of ornithine (ORN) to produce L-citrulline. This is Ornithine carbamoyltransferase from Pyrobaculum calidifontis (strain DSM 21063 / JCM 11548 / VA1).